The primary structure comprises 284 residues: Mevalonate kinase (284 aa).

86-96 is a binding site for ATP; the sequence is PIGSGLGSSAA. D137 (proton acceptor) is an active-site residue.

The protein belongs to the GHMP kinase family. Mevalonate kinase subfamily. As to quaternary structure, homodimer. Mg(2+) is required as a cofactor.

It localises to the cytoplasm. The enzyme catalyses (R)-mevalonate + ATP = (R)-5-phosphomevalonate + ADP + H(+). Its pathway is isoprenoid biosynthesis; isopentenyl diphosphate biosynthesis via mevalonate pathway; isopentenyl diphosphate from (R)-mevalonate: step 1/3. Its function is as follows. Catalyzes the phosphorylation of (R)-mevalonate (MVA) to (R)-mevalonate 5-phosphate (MVAP). Functions in the mevalonate (MVA) pathway leading to isopentenyl diphosphate (IPP), a key precursor for the biosynthesis of isoprenoid compounds such as archaeal membrane lipids. The chain is Mevalonate kinase from Archaeoglobus fulgidus (strain ATCC 49558 / DSM 4304 / JCM 9628 / NBRC 100126 / VC-16).